The sequence spans 160 residues: S-ribosylhomocysteine lyase (160 aa).

Fe cation-binding residues include histidine 57, histidine 61, and cysteine 127.

The protein belongs to the LuxS family. In terms of assembly, homodimer. It depends on Fe cation as a cofactor.

The catalysed reaction is S-(5-deoxy-D-ribos-5-yl)-L-homocysteine = (S)-4,5-dihydroxypentane-2,3-dione + L-homocysteine. In terms of biological role, involved in the synthesis of autoinducer 2 (AI-2) which is secreted by bacteria and is used to communicate both the cell density and the metabolic potential of the environment. The regulation of gene expression in response to changes in cell density is called quorum sensing. Catalyzes the transformation of S-ribosylhomocysteine (RHC) to homocysteine (HC) and 4,5-dihydroxy-2,3-pentadione (DPD). The sequence is that of S-ribosylhomocysteine lyase from Streptococcus gordonii (strain Challis / ATCC 35105 / BCRC 15272 / CH1 / DL1 / V288).